The following is a 192-amino-acid chain: Probable nicotinate-nucleotide adenylyltransferase (192 aa).

Belongs to the NadD family.

It catalyses the reaction nicotinate beta-D-ribonucleotide + ATP + H(+) = deamido-NAD(+) + diphosphate. It functions in the pathway cofactor biosynthesis; NAD(+) biosynthesis; deamido-NAD(+) from nicotinate D-ribonucleotide: step 1/1. Functionally, catalyzes the reversible adenylation of nicotinate mononucleotide (NaMN) to nicotinic acid adenine dinucleotide (NaAD). This is Probable nicotinate-nucleotide adenylyltransferase from Shouchella clausii (strain KSM-K16) (Alkalihalobacillus clausii).